A 154-amino-acid polypeptide reads, in one-letter code: Myoglobin (154 aa).

A Globin domain is found at G2–K148. S4 bears the Phosphoserine mark. H65 contacts nitrite. Residue H65 participates in O2 binding. T68 carries the post-translational modification Phosphothreonine. Heme b is bound at residue H94.

The protein belongs to the globin family. Monomeric.

It is found in the cytoplasm. The protein localises to the sarcoplasm. The catalysed reaction is Fe(III)-heme b-[protein] + nitric oxide + H2O = Fe(II)-heme b-[protein] + nitrite + 2 H(+). It carries out the reaction H2O2 + AH2 = A + 2 H2O. Monomeric heme protein which primary function is to store oxygen and facilitate its diffusion within muscle tissues. Reversibly binds oxygen through a pentacoordinated heme iron and enables its timely and efficient release as needed during periods of heightened demand. Depending on the oxidative conditions of tissues and cells, and in addition to its ability to bind oxygen, it also has a nitrite reductase activity whereby it regulates the production of bioactive nitric oxide. Under stress conditions, like hypoxia and anoxia, it also protects cells against reactive oxygen species thanks to its pseudoperoxidase activity. In Vulpes chama (Cape fox), this protein is Myoglobin (MB).